Consider the following 430-residue polypeptide: MMMENSGSLWDAARQFFPGGVNSPVRAFRAVGEEPVVAVRGEGAYLIDADGRRFLDYICSWGALLAGHAHPHVVDRLSEAIQRGTSFGLLSPYEVELARAIVASVPAIELVRFVNSGTEATMSAIRLARAVTGRNLVVKFAGCYHGHVDGLLVAAGSGVLTFGLPGTPGVTEGTARDTLVLPYNDQEAVEDAFAQHGERIAAVIVEPVAGNMGVVPPAAGFLSRLRELTRQAGALLIFDEVITGFRLGLGGAQERFGILPDLTCLGKVIGGGLPVGAYGGRRDLMEQVAPNGPVYQAGTLAGNPLSMVAGLATLELAREPGVYGRLETLAAWLQRGLEETIQESGLPAHVQRVGSMLTLFFSQQPVTDAQTAERCDTARFAAFHRAMRAQGILLPPSQFEAWFVSLAHREEDIDRTIEAARKALAEVARG.

Lys-267 carries the N6-(pyridoxal phosphate)lysine modification.

Belongs to the class-III pyridoxal-phosphate-dependent aminotransferase family. HemL subfamily. In terms of assembly, homodimer. Pyridoxal 5'-phosphate serves as cofactor.

The protein resides in the cytoplasm. It catalyses the reaction (S)-4-amino-5-oxopentanoate = 5-aminolevulinate. It functions in the pathway porphyrin-containing compound metabolism; protoporphyrin-IX biosynthesis; 5-aminolevulinate from L-glutamyl-tRNA(Glu): step 2/2. The sequence is that of Glutamate-1-semialdehyde 2,1-aminomutase from Thermomicrobium roseum (strain ATCC 27502 / DSM 5159 / P-2).